Here is a 310-residue protein sequence, read N- to C-terminus: Acetyl-coenzyme A carboxylase carboxyl transferase subunit beta (310 aa).

Positions 27–296 (LWKKCPKCSA…PEFENEEELE (270 aa)) constitute a CoA carboxyltransferase N-terminal domain. The Zn(2+) site is built by Cys31, Cys34, Cys50, and Cys53. The C4-type zinc finger occupies 31-53 (CPKCSAVLYRPELEKNLDVCPKC). The tract at residues 285-310 (PEPEFENEEELEEEEMERPEPPDNVE) is disordered. Over residues 287 to 310 (PEFENEEELEEEEMERPEPPDNVE) the composition is skewed to acidic residues.

It belongs to the AccD/PCCB family. Acetyl-CoA carboxylase is a heterohexamer composed of biotin carboxyl carrier protein (AccB), biotin carboxylase (AccC) and two subunits each of ACCase subunit alpha (AccA) and ACCase subunit beta (AccD). It depends on Zn(2+) as a cofactor.

The protein resides in the cytoplasm. The catalysed reaction is N(6)-carboxybiotinyl-L-lysyl-[protein] + acetyl-CoA = N(6)-biotinyl-L-lysyl-[protein] + malonyl-CoA. Its pathway is lipid metabolism; malonyl-CoA biosynthesis; malonyl-CoA from acetyl-CoA: step 1/1. In terms of biological role, component of the acetyl coenzyme A carboxylase (ACC) complex. Biotin carboxylase (BC) catalyzes the carboxylation of biotin on its carrier protein (BCCP) and then the CO(2) group is transferred by the transcarboxylase to acetyl-CoA to form malonyl-CoA. The chain is Acetyl-coenzyme A carboxylase carboxyl transferase subunit beta from Hahella chejuensis (strain KCTC 2396).